We begin with the raw amino-acid sequence, 340 residues long: Glycerol-3-phosphate dehydrogenase [NAD(P)+] (340 aa).

Serine 11, tryptophan 12, arginine 33, and lysine 106 together coordinate NADPH. Residues lysine 106, glycine 137, and serine 139 each contribute to the sn-glycerol 3-phosphate site. Alanine 141 serves as a coordination point for NADPH. Sn-glycerol 3-phosphate is bound by residues lysine 192, aspartate 245, serine 255, arginine 256, and asparagine 257. The active-site Proton acceptor is the lysine 192. NADPH is bound at residue arginine 256. NADPH-binding residues include valine 280 and glutamate 282.

This sequence belongs to the NAD-dependent glycerol-3-phosphate dehydrogenase family.

The protein resides in the cytoplasm. It carries out the reaction sn-glycerol 3-phosphate + NAD(+) = dihydroxyacetone phosphate + NADH + H(+). It catalyses the reaction sn-glycerol 3-phosphate + NADP(+) = dihydroxyacetone phosphate + NADPH + H(+). Its pathway is membrane lipid metabolism; glycerophospholipid metabolism. Functionally, catalyzes the reduction of the glycolytic intermediate dihydroxyacetone phosphate (DHAP) to sn-glycerol 3-phosphate (G3P), the key precursor for phospholipid synthesis. This is Glycerol-3-phosphate dehydrogenase [NAD(P)+] from Bacillus mycoides (strain KBAB4) (Bacillus weihenstephanensis).